The primary structure comprises 197 residues: ATP-dependent Clp protease proteolytic subunit 2 (197 aa).

The Nucleophile role is filled by S96. H121 is a catalytic residue.

It belongs to the peptidase S14 family. As to quaternary structure, fourteen ClpP subunits assemble into 2 heptameric rings which stack back to back to give a disk-like structure with a central cavity, resembling the structure of eukaryotic proteasomes.

Its subcellular location is the cytoplasm. It carries out the reaction Hydrolysis of proteins to small peptides in the presence of ATP and magnesium. alpha-casein is the usual test substrate. In the absence of ATP, only oligopeptides shorter than five residues are hydrolyzed (such as succinyl-Leu-Tyr-|-NHMec, and Leu-Tyr-Leu-|-Tyr-Trp, in which cleavage of the -Tyr-|-Leu- and -Tyr-|-Trp bonds also occurs).. Functionally, cleaves peptides in various proteins in a process that requires ATP hydrolysis. Has a chymotrypsin-like activity. Plays a major role in the degradation of misfolded proteins. This Parasynechococcus marenigrum (strain WH8102) protein is ATP-dependent Clp protease proteolytic subunit 2.